The primary structure comprises 1720 residues: TOG array regulator of axonemal microtubules protein 1 (1720 aa).

TOG regions lie at residues 94 to 312 (EEDT…RRLE) and 352 to 596 (PQEL…MPSS). HEAT repeat units lie at residues 175 to 212 (AFSLALLPQLVVSLREENPALRKDALQILHICLKRSPG), 214 to 247 (VLRTLIQQGLESTDARLRASTALLLPILLTTEDL), 251 to 289 (LDLTEVIISLARKLGDQETEEESETAFSALQQIGERLGQ), 345 to 384 (NLKFGIIPQELHSRLLDQEDYKNRTQAVEELKQVLGKFNP), 390 to 427 (SSLVGFISLLYNLLDDSNFKVVHGTLEVLHLLVIRLGE), 431 to 466 (QFLGPVIAASVKVLADNKLVIKQEYMKIFLKLMKEV), 467 to 504 (GPQQVLCLLLEHLKHKHSRVREEVVNICICSLLTYPSE), and 506 to 543 (FDLPKLSFDLAPALVDSKRRVRQAALEAFAVLASSMGS). Composition is skewed to polar residues over residues 794-809 (FGSQTECTSSNGQNPS), 819-829 (PVSSPRTSPKH), 842-852 (DNSVNFSNSWP), and 868-877 (LVSQKSSDPT). Disordered regions lie at residues 794–924 (FGSQ…SLLP), 970–998 (HSSLRSLRNSAAKKRAKLSGSTSDLESPD), and 1067–1087 (KKISHIAEQSPSAGSSSNPQQ). Residues 1073–1087 (AEQSPSAGSSSNPQQ) show a composition bias toward polar residues. The segment at 1256–1425 (EIALTEALRL…YIKDSVRNLQ (170 aa)) is TOG 3. HEAT repeat units follow at residues 1294 to 1331 (TKLHETNFAVVQEVKNLRSGVSRAAVVCLSDLFTYLKK) and 1335 to 1372 (QELDTTVKVLLHKAGESNTFIREDVDKALRAMVNNVTP). Positions 1430 to 1462 (GEIPLDTPSAKGRRSHTGSVGNTRSSSVSRDAF) are disordered. Over residues 1446-1458 (TGSVGNTRSSSVS) the composition is skewed to polar residues. The segment at 1484–1720 (SLESAEYLKL…LLDMTILNEL (237 aa)) is TOG 4. HEAT repeat units lie at residues 1485–1522 (LESAEYLKLITGLLNAKDFRDRINGIKQLLSDTENNQD), 1526–1563 (GNIVKIFDAFKSRLHDSNSKVNLVALETMHKMIPLLRD), and 1567–1605 (PIINMLIPAIVDNNLNSKNPGIYAAATNVVQALSQHVDN).

This sequence belongs to the Crescerin family. As to quaternary structure, interacts with ARMC9, CCDC66, CEP104 and CSPP1.

It is found in the cell projection. The protein resides in the cilium. The protein localises to the cytoplasm. It localises to the cytoskeleton. Its subcellular location is the cilium axoneme. Its function is as follows. Involved in ciliogenesis. It is required for appropriate acetylation and polyglutamylation of ciliary microtubules, and regulation of cilium length. Interacts with microtubules and promotes microtubule polymerization via its HEAT repeat domains, especially those in TOG region 2 and 4. This Homo sapiens (Human) protein is TOG array regulator of axonemal microtubules protein 1.